A 60-amino-acid polypeptide reads, in one-letter code: Large ribosomal subunit protein bL32 (60 aa).

Residues 1–23 are compositionally biased toward basic residues; it reads MAKHPVPKKKTSKSKRDMRRSHH. The segment at 1 to 34 is disordered; sequence MAKHPVPKKKTSKSKRDMRRSHHALTAPNLTECP. Residues C33, C36, C46, and C49 each coordinate Zn(2+). The segment at 33 to 49 adopts a C4-type zinc-finger fold; sequence CPQCHGKKLSHHICPNC.

This sequence belongs to the bacterial ribosomal protein bL32 family. Part of the 50S ribosomal subunit. Contacts proteins L17 and L22. The cofactor is Zn(2+).

Forms a cluster with L17 and L22, and with L22, a pair of 'tweezers' that hold together all the domains of the 23S rRNA. Interacts with the antibiotic troleandomycin which blocks the peptide exit tunnel. This is Large ribosomal subunit protein bL32 (rpmF) from Deinococcus radiodurans (strain ATCC 13939 / DSM 20539 / JCM 16871 / CCUG 27074 / LMG 4051 / NBRC 15346 / NCIMB 9279 / VKM B-1422 / R1).